A 64-amino-acid chain; its full sequence is Frontoxin V (64 aa).

Cystine bridges form between Cys-3/Cys-24, Cys-6/Cys-11, Cys-17/Cys-41, Cys-45/Cys-57, and Cys-58/Cys-63.

In terms of tissue distribution, expressed by the venom gland.

The protein resides in the secreted. Produces peripheral paralysis by blocking neuromuscular transmission at the postsynaptic site. Binds to the muscular nicotinic acetylcholine receptor (nAChR). This Micrurus frontalis (Coral snake) protein is Frontoxin V.